A 478-amino-acid chain; its full sequence is Glycogen synthase (478 aa).

Position 15 (K15) interacts with ADP-alpha-D-glucose.

Belongs to the glycosyltransferase 1 family. Bacterial/plant glycogen synthase subfamily.

The catalysed reaction is [(1-&gt;4)-alpha-D-glucosyl](n) + ADP-alpha-D-glucose = [(1-&gt;4)-alpha-D-glucosyl](n+1) + ADP + H(+). It participates in glycan biosynthesis; glycogen biosynthesis. Its function is as follows. Synthesizes alpha-1,4-glucan chains using ADP-glucose. The chain is Glycogen synthase from Acholeplasma laidlawii (strain PG-8A).